The sequence spans 228 residues: ATP-dependent dethiobiotin synthetase BioD (228 aa).

12 to 17 lines the ATP pocket; that stretch reads EIGKTT. Thr16 lines the Mg(2+) pocket. Lys37 is a catalytic residue. Residue Ser41 participates in substrate binding. ATP-binding positions include Asp54, 116 to 119, and 205 to 207; these read EGAG and PRL. Mg(2+) is bound by residues Asp54 and Glu116.

It belongs to the dethiobiotin synthetase family. In terms of assembly, homodimer. The cofactor is Mg(2+).

The protein resides in the cytoplasm. It catalyses the reaction (7R,8S)-7,8-diammoniononanoate + CO2 + ATP = (4R,5S)-dethiobiotin + ADP + phosphate + 3 H(+). It participates in cofactor biosynthesis; biotin biosynthesis; biotin from 7,8-diaminononanoate: step 1/2. Its function is as follows. Catalyzes a mechanistically unusual reaction, the ATP-dependent insertion of CO2 between the N7 and N8 nitrogen atoms of 7,8-diaminopelargonic acid (DAPA, also called 7,8-diammoniononanoate) to form a ureido ring. This is ATP-dependent dethiobiotin synthetase BioD from Pseudomonas aeruginosa (strain LESB58).